The primary structure comprises 375 residues: Queuine tRNA-ribosyltransferase (375 aa).

The active-site Proton acceptor is the aspartate 89. Substrate is bound by residues 89-93, aspartate 143, glutamine 187, and glycine 214; that span reads DSGGF. The segment at 245–251 is RNA binding; sequence GVGKPED. Aspartate 264 serves as the catalytic Nucleophile. The interval 269 to 273 is RNA binding; important for wobble base 34 recognition; sequence TRNAR. The Zn(2+) site is built by cysteine 302, cysteine 304, cysteine 307, and histidine 333.

This sequence belongs to the queuine tRNA-ribosyltransferase family. Homodimer. Within each dimer, one monomer is responsible for RNA recognition and catalysis, while the other monomer binds to the replacement base PreQ1. Zn(2+) is required as a cofactor.

The catalysed reaction is 7-aminomethyl-7-carbaguanine + guanosine(34) in tRNA = 7-aminomethyl-7-carbaguanosine(34) in tRNA + guanine. The protein operates within tRNA modification; tRNA-queuosine biosynthesis. Functionally, catalyzes the base-exchange of a guanine (G) residue with the queuine precursor 7-aminomethyl-7-deazaguanine (PreQ1) at position 34 (anticodon wobble position) in tRNAs with GU(N) anticodons (tRNA-Asp, -Asn, -His and -Tyr). Catalysis occurs through a double-displacement mechanism. The nucleophile active site attacks the C1' of nucleotide 34 to detach the guanine base from the RNA, forming a covalent enzyme-RNA intermediate. The proton acceptor active site deprotonates the incoming PreQ1, allowing a nucleophilic attack on the C1' of the ribose to form the product. After dissociation, two additional enzymatic reactions on the tRNA convert PreQ1 to queuine (Q), resulting in the hypermodified nucleoside queuosine (7-(((4,5-cis-dihydroxy-2-cyclopenten-1-yl)amino)methyl)-7-deazaguanosine). This Salmonella paratyphi A (strain ATCC 9150 / SARB42) protein is Queuine tRNA-ribosyltransferase.